A 276-amino-acid polypeptide reads, in one-letter code: Diacetylchitobiose uptake system permease protein DasC (276 aa).

The next 6 helical transmembrane spans lie at 14 to 34, 74 to 94, 105 to 125, 137 to 157, 186 to 206, and 241 to 261; these read TAVV…ATAF, LIVT…GSFA, GFIV…VIAI, SLVP…ILTL, VILP…FITA, and GATM…FVYL. Positions 70-261 constitute an ABC transmembrane type-1 domain; the sequence is VSNSLIVTVC…IPILILFVYL (192 aa).

The protein belongs to the binding-protein-dependent transport system permease family. In terms of assembly, the complex is composed of two ATP-binding proteins (MsiK), two transmembrane proteins (DasB and DasC) and a solute-binding protein (DasA).

The protein localises to the cell membrane. Functionally, part of the ABC transporter complex DasABC-MsiK involved in N,N'-diacetylchitobiose ((GlcNAc)2) uptake. Responsible for the translocation of the substrate across the membrane. The protein is Diacetylchitobiose uptake system permease protein DasC of Streptomyces coelicolor (strain ATCC BAA-471 / A3(2) / M145).